The following is a 41-amino-acid chain: MKVLSSLKSAKTRHRDCKVVRRRGKVFVICKSNPRFKARQR.

It belongs to the bacterial ribosomal protein bL36 family.

In Xanthomonas axonopodis pv. citri (strain 306), this protein is Large ribosomal subunit protein bL36.